Consider the following 376-residue polypeptide: Succinyl-diaminopimelate desuccinylase (376 aa).

Residue histidine 66 coordinates Zn(2+). Aspartate 68 is a catalytic residue. Zn(2+) is bound at residue aspartate 99. The active-site Proton acceptor is glutamate 133. Residues glutamate 134, glutamate 162, and histidine 349 each contribute to the Zn(2+) site.

It belongs to the peptidase M20A family. DapE subfamily. In terms of assembly, homodimer. Zn(2+) serves as cofactor. Co(2+) is required as a cofactor.

It catalyses the reaction N-succinyl-(2S,6S)-2,6-diaminopimelate + H2O = (2S,6S)-2,6-diaminopimelate + succinate. The protein operates within amino-acid biosynthesis; L-lysine biosynthesis via DAP pathway; LL-2,6-diaminopimelate from (S)-tetrahydrodipicolinate (succinylase route): step 3/3. Catalyzes the hydrolysis of N-succinyl-L,L-diaminopimelic acid (SDAP), forming succinate and LL-2,6-diaminopimelate (DAP), an intermediate involved in the bacterial biosynthesis of lysine and meso-diaminopimelic acid, an essential component of bacterial cell walls. This chain is Succinyl-diaminopimelate desuccinylase, found in Buchnera aphidicola subsp. Cinara cedri (strain Cc).